We begin with the raw amino-acid sequence, 333 residues long: Glycerol-3-phosphate dehydrogenase [NAD(P)+] (333 aa).

Positions 19, 40, 41, and 113 each coordinate NADPH. Sn-glycerol 3-phosphate-binding residues include lysine 113 and glycine 141. Residue alanine 145 participates in NADPH binding. Residues lysine 196, aspartate 249, serine 259, arginine 260, and asparagine 261 each coordinate sn-glycerol 3-phosphate. Lysine 196 serves as the catalytic Proton acceptor. Arginine 260 serves as a coordination point for NADPH. NADPH-binding residues include valine 282 and glutamate 283.

It belongs to the NAD-dependent glycerol-3-phosphate dehydrogenase family.

The protein resides in the cytoplasm. It catalyses the reaction sn-glycerol 3-phosphate + NAD(+) = dihydroxyacetone phosphate + NADH + H(+). The catalysed reaction is sn-glycerol 3-phosphate + NADP(+) = dihydroxyacetone phosphate + NADPH + H(+). It participates in membrane lipid metabolism; glycerophospholipid metabolism. Its function is as follows. Catalyzes the reduction of the glycolytic intermediate dihydroxyacetone phosphate (DHAP) to sn-glycerol 3-phosphate (G3P), the key precursor for phospholipid synthesis. This is Glycerol-3-phosphate dehydrogenase [NAD(P)+] from Sinorhizobium fredii (strain NBRC 101917 / NGR234).